The following is a 432-amino-acid chain: Mitochondrial distribution and morphology protein 12 (432 aa).

Residues 1–432 form the SMP-LTD domain; it reads MSIEVDWRAA…VFPSFWTFLI (432 aa). Disordered stretches follow at residues 182 to 273 and 354 to 377; these read WTDP…PRMR and QQEA…PKRQ. Over residues 214-234 the composition is skewed to low complexity; that stretch reads TSNPTSRPSTSSTLPSHPSAS. Basic and acidic residues-rich tracts occupy residues 243–253 and 355–364; these read TGKEHGSLAED and QEARGQDDRP.

This sequence belongs to the MDM12 family. Component of the ER-mitochondria encounter structure (ERMES) or MDM complex, composed of mmm1, mdm10, mdm12 and mdm34. A mmm1 homodimer associates with one molecule of mdm12 on each side in a pairwise head-to-tail manner, and the SMP-LTD domains of mmm1 and mdm12 generate a continuous hydrophobic tunnel for phospholipid trafficking.

It is found in the mitochondrion outer membrane. Its subcellular location is the endoplasmic reticulum membrane. Component of the ERMES/MDM complex, which serves as a molecular tether to connect the endoplasmic reticulum (ER) and mitochondria. Components of this complex are involved in the control of mitochondrial shape and protein biogenesis, and function in nonvesicular lipid trafficking between the ER and mitochondria. Mdm12 is required for the interaction of the ER-resident membrane protein mmm1 and the outer mitochondrial membrane-resident beta-barrel protein mdm10. The mdm12-mmm1 subcomplex functions in the major beta-barrel assembly pathway that is responsible for biogenesis of all mitochondrial outer membrane beta-barrel proteins, and acts in a late step after the SAM complex. The mdm10-mdm12-mmm1 subcomplex further acts in the TOM40-specific pathway after the action of the mdm12-mmm1 complex. Essential for establishing and maintaining the structure of mitochondria and maintenance of mtDNA nucleoids. The sequence is that of Mitochondrial distribution and morphology protein 12 from Aspergillus oryzae (strain ATCC 42149 / RIB 40) (Yellow koji mold).